Reading from the N-terminus, the 298-residue chain is N-acetylmuramic acid 6-phosphate etherase (298 aa).

In terms of domain architecture, SIS spans 55–218 (IHAQVSGGGR…STGLMIKSGK (164 aa)). Glu-83 acts as the Proton donor in catalysis. The active site involves Glu-114.

It belongs to the GCKR-like family. MurNAc-6-P etherase subfamily. Homodimer.

It carries out the reaction N-acetyl-D-muramate 6-phosphate + H2O = N-acetyl-D-glucosamine 6-phosphate + (R)-lactate. It participates in amino-sugar metabolism; N-acetylmuramate degradation. It functions in the pathway amino-sugar metabolism; 1,6-anhydro-N-acetylmuramate degradation. The protein operates within cell wall biogenesis; peptidoglycan recycling. Its function is as follows. Specifically catalyzes the cleavage of the D-lactyl ether substituent of MurNAc 6-phosphate, producing GlcNAc 6-phosphate and D-lactate. Together with AnmK, is also required for the utilization of anhydro-N-acetylmuramic acid (anhMurNAc) either imported from the medium or derived from its own cell wall murein, and thus plays a role in cell wall recycling. In Escherichia coli (strain K12 / MC4100 / BW2952), this protein is N-acetylmuramic acid 6-phosphate etherase.